The primary structure comprises 537 residues: Polyadenylate-binding protein 6 (537 aa).

RRM domains follow at residues 21-99 (GSLY…WSQR), 112-188 (ANLY…KFIN), 202-279 (TNVY…KALK), and 304-381 (SNLY…VAER). The tract at residues 503 to 537 (KATTSEENRKEERRLTLSGKLSPEVKVEESGKQLQ) is disordered. Basic and acidic residues-rich tracts occupy residues 506–517 (TSEENRKEERRL) and 525–537 (PEVK…KQLQ).

It belongs to the polyadenylate-binding protein type-1 family. As to expression, expressed at low levels in leaves and young seedlings.

The protein resides in the cytoplasm. It is found in the nucleus. In terms of biological role, binds the poly(A) tail of mRNA. Appears to be an important mediator of the multiple roles of the poly(A) tail in mRNA biogenesis, stability and translation. This Arabidopsis thaliana (Mouse-ear cress) protein is Polyadenylate-binding protein 6 (PAB6).